We begin with the raw amino-acid sequence, 367 residues long: tRNA-specific 2-thiouridylase MnmA (367 aa).

ATP is bound by residues 12–19 (GMSGGVDS) and Met-38. The interval 98–100 (NPD) is interaction with target base in tRNA. Residue Cys-103 is the Nucleophile of the active site. Residues Cys-103 and Cys-200 are joined by a disulfide bond. Residue Gly-128 participates in ATP binding. Residues 150–152 (KDQ) form an interaction with tRNA region. Cys-200 serves as the catalytic Cysteine persulfide intermediate. The segment at 312–313 (RY) is interaction with tRNA.

This sequence belongs to the MnmA/TRMU family. In terms of assembly, interacts with TusE.

Its subcellular location is the cytoplasm. The catalysed reaction is S-sulfanyl-L-cysteinyl-[protein] + uridine(34) in tRNA + AH2 + ATP = 2-thiouridine(34) in tRNA + L-cysteinyl-[protein] + A + AMP + diphosphate + H(+). In terms of biological role, catalyzes the 2-thiolation of uridine at the wobble position (U34) of tRNA(Lys), tRNA(Glu) and tRNA(Gln), leading to the formation of s(2)U34, the first step of tRNA-mnm(5)s(2)U34 synthesis. Sulfur is provided by IscS, via a sulfur-relay system. Binds ATP and its substrate tRNAs. This chain is tRNA-specific 2-thiouridylase MnmA, found in Serratia proteamaculans (strain 568).